The chain runs to 274 residues: MIVFPNAKINLGLQVVAKRADGYHNIETVFYPIPLTDALEIEVREDTCDRLSVHGIPIDAATEDNLVMKAILALRRKFDFPPLTIELIKHIPSGAGLGGGSSNASFMLKLVRDYFSLPIDDKELAAIALTIGADCPFFVGNRPVLATDLGQVFTPLPNFSLSGLHIAIVKPPIHINTAAAYKGLKHVGKRETMPDEIVYMPVDEWRGKLVNDFEESLFPEHPRLAELKEMLYRSGALYAAMSGSGSALFGLFREKPQLDKAAITDCFRWQSIIP.

Lys-8 is an active-site residue. 92–102 (PSGAGLGGGSS) provides a ligand contact to ATP. Asp-134 is a catalytic residue.

This sequence belongs to the GHMP kinase family. IspE subfamily.

The catalysed reaction is 4-CDP-2-C-methyl-D-erythritol + ATP = 4-CDP-2-C-methyl-D-erythritol 2-phosphate + ADP + H(+). It functions in the pathway isoprenoid biosynthesis; isopentenyl diphosphate biosynthesis via DXP pathway; isopentenyl diphosphate from 1-deoxy-D-xylulose 5-phosphate: step 3/6. Catalyzes the phosphorylation of the position 2 hydroxy group of 4-diphosphocytidyl-2C-methyl-D-erythritol. In Porphyromonas gingivalis (strain ATCC 33277 / DSM 20709 / CIP 103683 / JCM 12257 / NCTC 11834 / 2561), this protein is 4-diphosphocytidyl-2-C-methyl-D-erythritol kinase.